Reading from the N-terminus, the 979-residue chain is Oncostatin-M-specific receptor subunit beta (979 aa).

The N-terminal stretch at 1–27 (MALFAVFQTTFFLTLLSLRTYQSEVLA) is a signal peptide. Residues 28 to 740 (ERLPLTPVSL…VTTPDEHSSM (713 aa)) lie on the Extracellular side of the membrane. A glycan (N-linked (GlcNAc...) asparagine) is linked at N163. C245 and C255 form a disulfide bridge. Residues N326 and N380 are each glycosylated (N-linked (GlcNAc...) asparagine). 4 Fibronectin type-III domains span residues 335-428 (NPFS…TLEA), 433-528 (APDV…DPEN), 529-623 (KEVE…SQEL), and 625-736 (PSDN…TPDE). Positions 415-419 (WSEWS) match the WSXWS motif motif. N446 and N580 each carry an N-linked (GlcNAc...) asparagine glycan. Residues 741–761 (LIHILLPMVFCVLLIMVMCYL) form a helical membrane-spanning segment. The Cytoplasmic segment spans residues 762 to 979 (KSQWIKETCY…TLLDPGEHYC (218 aa)). Residues 770–778 (CYPDIPDPY) carry the Box 1 motif motif. Residues S826 and S889 each carry the phosphoserine modification.

This sequence belongs to the type I cytokine receptor family. Type 2 subfamily. As to quaternary structure, heterodimer composed of OSMR and IL6ST (type II OSM receptor). Heterodimer with IL31RA to form the IL31 receptor. In terms of tissue distribution, expressed in keratinocytes (at protein level). Expressed at relatively high levels in all neural cells as well as fibroblast and epithelial cells.

The protein localises to the membrane. In terms of biological role, associates with IL31RA to form the IL31 receptor. Binds IL31 to activate STAT3 and possibly STAT1 and STAT5. Capable of transducing OSM-specific signaling events. The chain is Oncostatin-M-specific receptor subunit beta (OSMR) from Homo sapiens (Human).